A 412-amino-acid polypeptide reads, in one-letter code: Transcription factor IIIA (412 aa).

The disordered stretch occupies residues 1-20; the sequence is MSESDETKSISSLISSSSSS. Low complexity predominate over residues 9-20; that stretch reads SISSLISSSSSS. C2H2-type zinc fingers lie at residues 25–49, 55–79, 85–107, 111–136, 140–162, 169–194, and 197–219; these read YICTYEGCDKAYNRPSLLEQHLRTH, YKCTVEDCDKAFFRKSHLETHIVSH, FHCSVCGKGVNSRQHLKRHEITH, FKCTFENCQEAFYKHQSLRHHILSVH, LTCKQCNKVFTRPSKLAQHKLKH, YQCDHPGCFKNFQTWSVLQFHIKQSH, and LKCPKCGKGCVGKKGLSSHMLSH. The segment at 228-252 adopts a C2H2-type 8; degenerate zinc-finger fold; it reads WTCDYCDVGKFAKKNELVEHYNIFH. Positions 285-316 are disordered; that stretch reads LETEKLKVEEDEEDEEDSLDEKRSDVRSDSMS. The span at 293 to 303 shows a compositional bias: acidic residues; sequence EEDEEDEEDSL. A C2H2-type 9 zinc finger spans residues 345–369; that stretch reads INCPKNNCDRMFSREYDLRRHLKWH.

Its subcellular location is the nucleus. Its function is as follows. Transcription factor required for transcription of 5S rRNA by RNA polymerase III. This is Transcription factor IIIA (PZF1) from Candida albicans (strain SC5314 / ATCC MYA-2876) (Yeast).